The following is a 542-amino-acid chain: Chaperonin GroEL 2 (542 aa).

Residues 30-33, Lys51, 87-91, Gly415, and Asp496 each bind ATP; these read TLGP and DGTTT.

The protein belongs to the chaperonin (HSP60) family. Forms a cylinder of 14 subunits composed of two heptameric rings stacked back-to-back. Interacts with the co-chaperonin GroES.

Its subcellular location is the cytoplasm. It catalyses the reaction ATP + H2O + a folded polypeptide = ADP + phosphate + an unfolded polypeptide.. In terms of biological role, together with its co-chaperonin GroES, plays an essential role in assisting protein folding. The GroEL-GroES system forms a nano-cage that allows encapsulation of the non-native substrate proteins and provides a physical environment optimized to promote and accelerate protein folding. This Rhizobium meliloti (strain 1021) (Ensifer meliloti) protein is Chaperonin GroEL 2.